The sequence spans 183 residues: MTKQPEDWLDDVPGDDIEDEDDEIIWVSKSEIKRDAEELKRLGAEIVDLGKNALDKIPLDADLRPAIELAQRIKMEGRRRQLQLIGKMLRQRDVEPIRQALDKLKNRHNQQVVLFHKLENLRDRLIDQGDDAIAEVLNLWPDADRQQLRTLIRNAKKEKEGNKPPKSARQIFQYLRELAENEG.

This sequence belongs to the DarP family.

The protein localises to the cytoplasm. In terms of biological role, member of a network of 50S ribosomal subunit biogenesis factors which assembles along the 30S-50S interface, preventing incorrect 23S rRNA structures from forming. Promotes peptidyl transferase center (PTC) maturation. This is Dual-action ribosomal maturation protein DarP from Shigella flexneri serotype 5b (strain 8401).